Consider the following 327-residue polypeptide: GMP reductase (327 aa).

The Thioimidate intermediate role is filled by cysteine 176. 205–228 (IIADGGIRTHGDIAKSIRFGASMV) contributes to the NADP(+) binding site.

The protein belongs to the IMPDH/GMPR family. GuaC type 2 subfamily.

It carries out the reaction IMP + NH4(+) + NADP(+) = GMP + NADPH + 2 H(+). Functionally, catalyzes the irreversible NADPH-dependent deamination of GMP to IMP. It functions in the conversion of nucleobase, nucleoside and nucleotide derivatives of G to A nucleotides, and in maintaining the intracellular balance of A and G nucleotides. This chain is GMP reductase, found in Streptococcus pyogenes serotype M6 (strain ATCC BAA-946 / MGAS10394).